The chain runs to 117 residues: UPF0342 protein Bcer98_0695 (117 aa).

The protein belongs to the UPF0342 family.

This Bacillus cytotoxicus (strain DSM 22905 / CIP 110041 / 391-98 / NVH 391-98) protein is UPF0342 protein Bcer98_0695.